The sequence spans 208 residues: Urease accessory protein UreE (208 aa).

The segment at 145–195 (AEAHGHGQAHAHDHHDHDHHDHGHDHAHHDHAHHDHAHDHHGHDHAHDHAH) is disordered.

The protein belongs to the UreE family.

Its subcellular location is the cytoplasm. Its function is as follows. Involved in urease metallocenter assembly. Binds nickel. Probably functions as a nickel donor during metallocenter assembly. In Azorhizobium caulinodans (strain ATCC 43989 / DSM 5975 / JCM 20966 / LMG 6465 / NBRC 14845 / NCIMB 13405 / ORS 571), this protein is Urease accessory protein UreE.